Consider the following 335-residue polypeptide: Phospho-N-acetylmuramoyl-pentapeptide-transferase (335 aa).

Transmembrane regions (helical) follow at residues 2–22 (PPLF…LILV), 55–75 (IPTA…LLLL), 77–97 (CNLW…ALGW), 118–137 (FFIQ…IAYG), 153–173 (LPHC…AIVG), 193–213 (VIAC…WAFI), 238–258 (IFMG…CAVL), 263–283 (FMLL…ILQV), and 313–333 (VVRN…FAVF).

Belongs to the glycosyltransferase 4 family. MraY subfamily. Requires Mg(2+) as cofactor.

It is found in the cell inner membrane. It catalyses the reaction UDP-N-acetyl-alpha-D-muramoyl-L-alanyl-gamma-D-glutamyl-meso-2,6-diaminopimeloyl-D-alanyl-D-alanine + di-trans,octa-cis-undecaprenyl phosphate = di-trans,octa-cis-undecaprenyl diphospho-N-acetyl-alpha-D-muramoyl-L-alanyl-D-glutamyl-meso-2,6-diaminopimeloyl-D-alanyl-D-alanine + UMP. It functions in the pathway cell wall biogenesis; peptidoglycan biosynthesis. Catalyzes the initial step of the lipid cycle reactions in the biosynthesis of the cell wall peptidoglycan: transfers peptidoglycan precursor phospho-MurNAc-pentapeptide from UDP-MurNAc-pentapeptide onto the lipid carrier undecaprenyl phosphate, yielding undecaprenyl-pyrophosphoryl-MurNAc-pentapeptide, known as lipid I. This is Phospho-N-acetylmuramoyl-pentapeptide-transferase from Chlamydia muridarum (strain MoPn / Nigg).